The primary structure comprises 579 residues: Isocitrate dehydrogenase kinase/phosphatase (579 aa).

Residues A324–M330 and K345 each bind ATP. Residue D380 is part of the active site.

It belongs to the AceK family.

It localises to the cytoplasm. It catalyses the reaction L-seryl-[isocitrate dehydrogenase] + ATP = O-phospho-L-seryl-[isocitrate dehydrogenase] + ADP + H(+). Bifunctional enzyme which can phosphorylate or dephosphorylate isocitrate dehydrogenase (IDH) on a specific serine residue. This is a regulatory mechanism which enables bacteria to bypass the Krebs cycle via the glyoxylate shunt in response to the source of carbon. When bacteria are grown on glucose, IDH is fully active and unphosphorylated, but when grown on acetate or ethanol, the activity of IDH declines drastically concomitant with its phosphorylation. The polypeptide is Isocitrate dehydrogenase kinase/phosphatase (Xanthomonas axonopodis pv. citri (strain 306)).